Here is a 1390-residue protein sequence, read N- to C-terminus: DNA-directed RNA polymerase III subunit RPC1 (1390 aa).

C69, C72, C79, H82, C109, and C112 together coordinate Zn(2+). DNA is bound at residue K144. C156 and C159 together coordinate Zn(2+). K167, S326, K348, R353, R360, and R366 together coordinate DNA. N6-acetyllysine is present on K445. R464 provides a ligand contact to RNA. Residues D499, D501, and D503 each coordinate Mg(2+). D503 is an RNA binding site. Positions 843–884 are bridging helix; that stretch reads TPTEFFFHTMAGREGLVDTAVKTAETGYMQRRLVKSLEDLCS. The segment at 1029–1070 is trigger loop; sequence PGSAVGALCAQSIGEPGTQMTLKTFHFAGVASMNITLGVPRI. Residues R1159, R1305, and K1323 each contribute to the DNA site.

Belongs to the RNA polymerase beta' chain family. In terms of assembly, component of the RNA polymerase III (Pol III) (Pol III) complex consisting of 17 subunits: a ten-subunit catalytic core composed of POLR3A/RPC1, POLR3B/RPC2, POLR1C/RPAC1, POLR1D/RPAC2, POLR3K/RPC10, POLR2E/RPABC1, POLR2F/RPABC2, POLR2H/RPABC3, POLR2K/RPABC4 and POLR2L/RPABC5; a mobile stalk composed of two subunits POLR3H/RPC8 and CRCP/RPC9, protruding from the core and functioning primarily in transcription initiation; and additional subunits homologous to general transcription factors of the RNA polymerase II machinery, POLR3C/RPC3-POLR3F/RPC6-POLR3G/RPC7 heterotrimer required for transcription initiation and POLR3D/RPC4-POLR3E/RPC5 heterodimer involved in both transcription initiation and termination. Pol III exists as two alternative complexes defined by the mutually exclusive incorporation of subunit POLR3G/RPC7alpha or POLR3GL/RPC7beta. The presence of POLR3G/RPC7alpha or POLR3GL/RPC7beta differentially modulates the transcription potential of Pol III, with POLR3G/RPC7alpha specifically associated with transcription of snaR-A non-coding RNAs. As part of the RNA polymerase III complex, interacts with PKP2. Mg(2+) serves as cofactor. Expressed in the brain, in the cortex and the white matter (at protein level).

The protein resides in the nucleus. It localises to the cytoplasm. It is found in the cytosol. It catalyses the reaction RNA(n) + a ribonucleoside 5'-triphosphate = RNA(n+1) + diphosphate. Catalytic core component of RNA polymerase III (Pol III), a DNA-dependent RNA polymerase which synthesizes small non-coding RNAs using the four ribonucleoside triphosphates as substrates. Synthesizes 5S rRNA, snRNAs, tRNAs and miRNAs from at least 500 distinct genomic loci. Pol III-mediated transcription cycle proceeds through transcription initiation, transcription elongation and transcription termination stages. During transcription initiation, Pol III is recruited to DNA promoters type I, II or III with the help of general transcription factors and other specific initiation factors. Once the polymerase has escaped from the promoter it enters the elongation phase during which RNA is actively polymerized, based on complementarity with the template DNA strand. Transcription termination involves the release of the RNA transcript and polymerase from the DNA. Forms Pol III active center together with the second largest subunit POLR3B/RPC2. Appends one nucleotide at a time to the 3' end of the nascent RNA, with POLR3A/RPC1 contributing a Mg(2+)-coordinating DxDGD motif, and POLR3B/RPC2 participating in the coordination of a second Mg(2+) ion and providing lysine residues believed to facilitate Watson-Crick base pairing between the incoming nucleotide and template base. Typically, Mg(2+) ions direct a 5' nucleoside triphosphate to form a phosphodiester bond with the 3' hydroxyl of the preceding nucleotide of the nascent RNA, with the elimination of pyrophosphate. Pol III plays a key role in sensing and limiting infection by intracellular bacteria and DNA viruses. Acts as a nuclear and cytosolic DNA sensor involved in innate immune response. Can sense non-self dsDNA that serves as template for transcription into dsRNA. The non-self RNA polymerase III transcripts, such as Epstein-Barr virus-encoded RNAs (EBERs) induce type I interferon and NF-kappa-B through the RIG-I pathway. In Homo sapiens (Human), this protein is DNA-directed RNA polymerase III subunit RPC1.